The chain runs to 158 residues: S-ribosylhomocysteine lyase (158 aa).

3 residues coordinate Fe cation: His55, His59, and Cys127.

Belongs to the LuxS family. Homodimer. The cofactor is Fe cation.

It catalyses the reaction S-(5-deoxy-D-ribos-5-yl)-L-homocysteine = (S)-4,5-dihydroxypentane-2,3-dione + L-homocysteine. Functionally, involved in the synthesis of autoinducer 2 (AI-2) which is secreted by bacteria and is used to communicate both the cell density and the metabolic potential of the environment. The regulation of gene expression in response to changes in cell density is called quorum sensing. Catalyzes the transformation of S-ribosylhomocysteine (RHC) to homocysteine (HC) and 4,5-dihydroxy-2,3-pentadione (DPD). The sequence is that of S-ribosylhomocysteine lyase from Geobacillus thermodenitrificans (strain NG80-2).